Reading from the N-terminus, the 219-residue chain is Proline-rich protein 27 (219 aa).

An N-terminal signal peptide occupies residues 1–15; sequence MKLLLWACIVCVAFA. Over residues 155-204 the composition is skewed to low complexity; that stretch reads AAEPAAEAPVGAEPAAEAPVAAEPAAEAPVGVEPAAEEPSPAEPATAKPA. The disordered stretch occupies residues 155 to 219; that stretch reads AAEPAAEAPV…PSPSLEQANQ (65 aa).

The protein resides in the secreted. In Homo sapiens (Human), this protein is Proline-rich protein 27 (PRR27).